A 165-amino-acid chain; its full sequence is Probable chemoreceptor glutamine deamidase CheD (165 aa).

The protein belongs to the CheD family.

It catalyses the reaction L-glutaminyl-[protein] + H2O = L-glutamyl-[protein] + NH4(+). In terms of biological role, probably deamidates glutamine residues to glutamate on methyl-accepting chemotaxis receptors (MCPs), playing an important role in chemotaxis. This is Probable chemoreceptor glutamine deamidase CheD from Geobacillus kaustophilus (strain HTA426).